Here is a 756-residue protein sequence, read N- to C-terminus: Polyribonucleotide nucleotidyltransferase (756 aa).

Positions 527 and 533 each coordinate Mg(2+). The KH domain maps to 593 to 652; sequence PRITTIKVPVDKIGEVIGPKGKMINSITEETGASISIEDDGTVFVGASNGEAAQAAIDKI. The 70-residue stretch at 664-733 folds into the S1 motif domain; that stretch reads GERFLGTVVK…NRGKISLVLV (70 aa).

Belongs to the polyribonucleotide nucleotidyltransferase family. It depends on Mg(2+) as a cofactor.

Its subcellular location is the cytoplasm. The catalysed reaction is RNA(n+1) + phosphate = RNA(n) + a ribonucleoside 5'-diphosphate. Its function is as follows. Involved in mRNA degradation. Catalyzes the phosphorolysis of single-stranded polyribonucleotides processively in the 3'- to 5'-direction. This is Polyribonucleotide nucleotidyltransferase from Mycolicibacterium gilvum (strain PYR-GCK) (Mycobacterium gilvum (strain PYR-GCK)).